A 259-amino-acid chain; its full sequence is tRNA-cytidine(32) 2-sulfurtransferase (259 aa).

Residues S40–S45 carry the PP-loop motif motif. The [4Fe-4S] cluster site is built by C114, C117, and C205.

It belongs to the TtcA family. Homodimer. Requires Mg(2+) as cofactor. It depends on [4Fe-4S] cluster as a cofactor.

The protein resides in the cytoplasm. The catalysed reaction is cytidine(32) in tRNA + S-sulfanyl-L-cysteinyl-[cysteine desulfurase] + AH2 + ATP = 2-thiocytidine(32) in tRNA + L-cysteinyl-[cysteine desulfurase] + A + AMP + diphosphate + H(+). The protein operates within tRNA modification. In terms of biological role, catalyzes the ATP-dependent 2-thiolation of cytidine in position 32 of tRNA, to form 2-thiocytidine (s(2)C32). The sulfur atoms are provided by the cysteine/cysteine desulfurase (IscS) system. This Bdellovibrio bacteriovorus (strain ATCC 15356 / DSM 50701 / NCIMB 9529 / HD100) protein is tRNA-cytidine(32) 2-sulfurtransferase.